The chain runs to 539 residues: Eukaryotic translation initiation factor 3 subunit L (539 aa).

Residues 306–514 (TFSDILLYIQ…IHIADTKVSH (209 aa)) form the PCI domain.

The protein belongs to the eIF-3 subunit L family. As to quaternary structure, component of the eukaryotic translation initiation factor 3 (eIF-3) complex. The eIF-3 complex interacts with pix.

Its subcellular location is the cytoplasm. In terms of biological role, component of the eukaryotic translation initiation factor 3 (eIF-3) complex, which is involved in protein synthesis of a specialized repertoire of mRNAs and, together with other initiation factors, stimulates binding of mRNA and methionyl-tRNAi to the 40S ribosome. The eIF-3 complex specifically targets and initiates translation of a subset of mRNAs involved in cell proliferation. In Drosophila yakuba (Fruit fly), this protein is Eukaryotic translation initiation factor 3 subunit L.